The primary structure comprises 231 residues: Large ribosomal subunit protein uL1 (231 aa).

The protein belongs to the universal ribosomal protein uL1 family. As to quaternary structure, part of the 50S ribosomal subunit.

In terms of biological role, binds directly to 23S rRNA. The L1 stalk is quite mobile in the ribosome, and is involved in E site tRNA release. Functionally, protein L1 is also a translational repressor protein, it controls the translation of the L11 operon by binding to its mRNA. This chain is Large ribosomal subunit protein uL1, found in Ruthia magnifica subsp. Calyptogena magnifica.